The primary structure comprises 260 residues: Thymidylate synthase (260 aa).

It participates in pyrimidine metabolism; dTTP biosynthesis. In terms of biological role, is able to catalyze the biosynthesis of dTMP using dUMP, tetrahydrofolate and formaldehyde in vitro, i.e. a reaction equivalent to that catalyzed by bacterial thymidylate synthases (EC 2.1.1.45). However, M.jannaschii like most methanogenic Archaea lacks folates, thus the physiological cosubstrate is unknown but is likely one of the non-methylated methanopterin biosynthetic intermediates. This chain is Thymidylate synthase, found in Methanocaldococcus jannaschii (strain ATCC 43067 / DSM 2661 / JAL-1 / JCM 10045 / NBRC 100440) (Methanococcus jannaschii).